The primary structure comprises 155 residues: Histone H3-like centromeric protein hH3v (155 aa).

A compositionally biased stretch (low complexity) spans 1-24; the sequence is MPPKKGGVTKSKAVSKKAAAVPTP. Residues 1–56 form a disordered region; it reads MPPKKGGVTKSKAVSKKAAAVPTPKATPPGRRKSRASSVQPGDPVPQGKKRRYRPG. Residues 45-148 are H3-like; that stretch reads VPQGKKRRYR…IQLARRIRGV (104 aa).

It belongs to the histone H3 family. Component of centromeric nucleosomes, where DNA is wrapped around a histone octamer core. The octamer contains two molecules each of H2A, H2B, hH3v/CENPA and H4 assembled in one hH3v-H4 heterotetramer and two H2A-H2B heterodimers. Interacts with the inner kinetochore. Post-translationally, ubiquitinated. Is degraded through ubiquitin-mediated proteolysis when not protected by its association to the kinetochore.

The protein localises to the nucleus. It is found in the chromosome. It localises to the centromere. Its function is as follows. Histone H3-like nucleosomal protein that is specifically found in centromeric nucleosomes. Replaces conventional H3 in the nucleosome core of centromeric chromatin that serves as an assembly site for the inner kinetochore. Required for recruitment and assembly of kinetochore proteins, mitotic progression and chromosome segregation. May serve as an epigenetic mark that propagates centromere identity through replication and cell division. This is Histone H3-like centromeric protein hH3v (hH3v) from Neurospora crassa (strain ATCC 24698 / 74-OR23-1A / CBS 708.71 / DSM 1257 / FGSC 987).